Reading from the N-terminus, the 428-residue chain is 3-phosphoshikimate 1-carboxyvinyltransferase (428 aa).

3-phosphoshikimate-binding residues include Lys-22, Ser-23, and Arg-27. Lys-22 contacts phosphoenolpyruvate. Residues Gly-96 and Arg-124 each contribute to the phosphoenolpyruvate site. Residues Ser-170, Ser-171, Gln-172, Ser-198, Asp-314, Asn-337, and Lys-341 each coordinate 3-phosphoshikimate. A phosphoenolpyruvate-binding site is contributed by Gln-172. The Proton acceptor role is filled by Asp-314. Phosphoenolpyruvate-binding residues include Arg-345, Arg-387, and Lys-412.

The protein belongs to the EPSP synthase family. Monomer.

It is found in the cytoplasm. It carries out the reaction 3-phosphoshikimate + phosphoenolpyruvate = 5-O-(1-carboxyvinyl)-3-phosphoshikimate + phosphate. It participates in metabolic intermediate biosynthesis; chorismate biosynthesis; chorismate from D-erythrose 4-phosphate and phosphoenolpyruvate: step 6/7. Functionally, catalyzes the transfer of the enolpyruvyl moiety of phosphoenolpyruvate (PEP) to the 5-hydroxyl of shikimate-3-phosphate (S3P) to produce enolpyruvyl shikimate-3-phosphate and inorganic phosphate. The chain is 3-phosphoshikimate 1-carboxyvinyltransferase from Photobacterium profundum (strain SS9).